We begin with the raw amino-acid sequence, 260 residues long: Putative protein phosphatase (260 aa).

Positions F9–L254 constitute a PPM-type phosphatase domain.

The catalysed reaction is O-phospho-L-seryl-[protein] + H2O = L-seryl-[protein] + phosphate. It carries out the reaction O-phospho-L-threonyl-[protein] + H2O = L-threonyl-[protein] + phosphate. In Mycoplasma genitalium (strain ATCC 33530 / DSM 19775 / NCTC 10195 / G37) (Mycoplasmoides genitalium), this protein is Putative protein phosphatase.